A 193-amino-acid chain; its full sequence is E3 ubiquitin-protein ligase RMA2 (193 aa).

Residues 21-75 (CNICLDQVRDPVVTLCGHLFCWPCIHKWTYASNNSRQRVDQYDHKREPPKCPVCK) form an RING-type zinc finger. The chain crosses the membrane as a helical; Anchor for type IV membrane protein span at residues 175 to 192 (LSRVYLFLLCFMFMCLFL).

In terms of assembly, interacts with ERABP1. In terms of tissue distribution, barely detected in roots and limited to the root tips. Expressed in leaf hydathodes and in siliques.

Its subcellular location is the endoplasmic reticulum membrane. The catalysed reaction is S-ubiquitinyl-[E2 ubiquitin-conjugating enzyme]-L-cysteine + [acceptor protein]-L-lysine = [E2 ubiquitin-conjugating enzyme]-L-cysteine + N(6)-ubiquitinyl-[acceptor protein]-L-lysine.. Its pathway is protein modification; protein ubiquitination. E3 ubiquitin-protein ligase that promotes the ubiquitination and proteasomal degradation of the auxin-binding protein ERABP1. This chain is E3 ubiquitin-protein ligase RMA2 (RMA2), found in Arabidopsis thaliana (Mouse-ear cress).